Reading from the N-terminus, the 138-residue chain is MLSPKRTKFRRPHRGNLKGKACRGTKIAFGEYGLQALEPCWITSRQIESGRRVLTRYVRRTGKLWIRIFPDKPITMRPAGTRMGSGKGFPEYWVAVVHPGKILYEIQGVSEPVAKQALKTAAYKMPIKTKFVKVESNP.

It belongs to the universal ribosomal protein uL16 family. In terms of assembly, part of the 50S ribosomal subunit.

It localises to the plastid. The protein resides in the chloroplast. This Tetradesmus obliquus (Green alga) protein is Large ribosomal subunit protein uL16c.